Consider the following 810-residue polypeptide: MKRNRDTKMDHKSGKMNANDRNQQNNIKQEFKSDLNEAANAQPKYNFNIMVSDAMAKTSKQLLYAHIYNYLLHNKHLETAKQFLKEADVPLLTGNNNDDVAVKNPTAATLSQNDLNPRELLPTKMLMNANDTFLLEWWEYFSSVYDFVDTSDLSALQNNDFLQDRIFPILPTSNKVPTQRYSRQQSDQVQMNQNSTGNSSRSGMGTPIANPSNQNYQHSSNPNSGTPTSTANNNTNNNNNNNSNNNNSKQFAQQTLNSQLQNGVVYPSNQNGQQHARRPQSVSSDISNTMSMDEQQQQMNLLKQVNSQNPQLMNNMLFQNVQQQSSSSPNTPVSANNVDGNGQFPISKMNWNRIQRERMRIMRQQQQIRQQQMQQQRPQPNQQQIQQQQQRSQLPQQQAQQRIQQAKQQVSQQQRPHPTQQQVHQMQQMQKQLQQQLQQQSVMQGQQQGPMQLQQGQTQSQGQGQAQDAQQQGQPLSQQQMKQLRNGGNVDSNIQQQYMSMMMQMMMLSKNNQQIPQQMQQQMMQQMQQLQQQQQQALQQNTGKPQLSHQFVVPVNNQVVTTPGGSSTSARTKSNARSTNTNKKKMETVSKKNNKRSDINSPATIVPISTPTSSDGNIISSTQGTNFPIVNLSQAPTPTSKAEGDGEAGQNKKRRRKKPKTPNTNVSASTPTAGNTANSTPVTTSGVNSSVVGSATTSNDKRTPSNTVANNDGSMQTNVNELDIGLGMNTNSNNNNNNNNNNNNNNNNNNNNNNNNNNNPNSNSRDKINNNDLNMNLDMMSFGNSASSMGLNDGFQLFDMDGFPNDIMGS.

Positions 1–13 (MKRNRDTKMDHKS) are enriched in basic and acidic residues. Residues 1–25 (MKRNRDTKMDHKSGKMNANDRNQQN) are disordered. Residues 59 to 91 (SKQLLYAHIYNYLLHNKHLETAKQFLKEADVPL) form the LisH domain. Residues 173-218 (SNKVPTQRYSRQQSDQVQMNQNSTGNSSRSGMGTPIANPSNQNYQH) show a composition bias toward polar residues. 6 disordered regions span residues 173 to 249 (SNKV…NNSK), 263 to 296 (GVVYPSNQNGQQHARRPQSVSSDISNTMSMDEQQ), 321 to 347 (VQQQSSSSPNTPVSANNVDGNGQFPIS), 364 to 428 (QQQQ…QMQQ), 441 to 489 (SVMQ…NGGN), and 560 to 771 (VTTP…INNN). Low complexity predominate over residues 219 to 248 (SSNPNSGTPTSTANNNTNNNNNNNSNNNNS). Residues 321–338 (VQQQSSSSPNTPVSANNV) are compositionally biased toward low complexity. Residues 441–484 (SVMQGQQQGPMQLQQGQTQSQGQGQAQDAQQQGQPLSQQQMKQL) show a composition bias toward low complexity. Positions 564–581 (GGSSTSARTKSNARSTNT) are enriched in polar residues. The span at 584 to 598 (KKMETVSKKNNKRSD) shows a compositional bias: basic and acidic residues. Positions 599–640 (INSPATIVPISTPTSSDGNIISSTQGTNFPIVNLSQAPTPTS) are enriched in polar residues. The span at 651 to 660 (NKKRRRKKPK) shows a compositional bias: basic residues. The segment covering 666–677 (VSASTPTAGNTA) has biased composition (polar residues). Residues 678–698 (NSTPVTTSGVNSSVVGSATTS) show a composition bias toward low complexity. Residues 704–720 (PSNTVANNDGSMQTNVN) show a composition bias toward polar residues. The span at 729–763 (NTNSNNNNNNNNNNNNNNNNNNNNNNNNNNNPNSN) shows a compositional bias: low complexity.

Belongs to the MSS11 family.

It localises to the cytoplasm. The protein localises to the nucleus. Its function is as follows. Transcription factor that regulates pseudohyphal differentiation, invasive growth, floculation, adhesion and starch metabolism in response to nutrient availability. The chain is Transcription activator MSS11 (MSS11) from Vanderwaltozyma polyspora (strain ATCC 22028 / DSM 70294 / BCRC 21397 / CBS 2163 / NBRC 10782 / NRRL Y-8283 / UCD 57-17) (Kluyveromyces polysporus).